The sequence spans 53 residues: Conotoxin Cal9.2e (53 aa).

A propeptide spanning residues 1–6 is cleaved from the precursor; sequence KKGVTQ. Cystine bridges form between Cys15–Cys32, Cys20–Cys42, and Cys22–Cys47.

In terms of tissue distribution, expressed by the venom duct.

It is found in the secreted. Functionally, probable neurotoxin with unknown target. Possibly targets ion channels. The chain is Conotoxin Cal9.2e from Californiconus californicus (California cone).